A 224-amino-acid chain; its full sequence is Large ribosomal subunit protein uL1 (224 aa).

Belongs to the universal ribosomal protein uL1 family. In terms of assembly, part of the 50S ribosomal subunit.

Its function is as follows. Binds directly to 23S rRNA. The L1 stalk is quite mobile in the ribosome, and is involved in E site tRNA release. Protein L1 is also a translational repressor protein, it controls the translation of the L11 operon by binding to its mRNA. The sequence is that of Large ribosomal subunit protein uL1 from Borrelia recurrentis (strain A1).